A 656-amino-acid polypeptide reads, in one-letter code: MMATPATDLISDNDKYNKQCLSDSSDSGSDVSFFSVNESEGELDTMEKVDTLIGGARVISNKVEKDSDSEQRGRKKETTGPNNYHNLEEKQASAISLDADDEDLDEIISYSHDGNYDSSHKTFSFSLPFGNTNFRSSSPLAIIKTVLPKTPDEFIKKNLRKNEIKQKLKKSTSISSLEEIELFKYERGIDNSRLRAVKESLEMDALKNSIKQITADPFDKTHDGYYRSRLESIWNELEGDVVIMGGYRGSVLRDATTHKRIWIPLKAGLNMTKVDLLIGPNDEDELKTQKEIVPDGMLTHIGPVDISKRLIKRLDANPNLNVQQFGYDWRLSLDISAKHLTTKLEEIYNKQKNKKGIYIIAHSMGGLVAHKVLQDCTHLIRGIIYVGSPSQCPNILGPIRFGDDVMWNKTIFTKETNFFMRSSFYFLPLDGRCFVDKITLERYDFDFFDTDVWKTLGLSPLVNEKREESAHEKSKLLPRKTKSALSLKATLNATTKFVLNAPVVRNVAGNNKQVPRDVPFDEVFHTSYEDSCEYLARTLKRTKNYLDSLDYDPNKEYPPLAMVYGNKVPTVRGAKVNGIQDIKDGNYEDFYYGPGDGVVHHKWLLPEQRGFPVVCKIASSSGHVSLMTDLKSMAKAFISIVDSEKEGRRSRTRTSS.

Disordered regions lie at residues Met1 to Gly41 and Ser60 to Glu88. Low complexity predominate over residues Ser22–Val36. Ser39 carries the phosphoserine modification. The segment covering Lys62–Thr78 has biased composition (basic and acidic residues).

The protein resides in the cytoplasm. Its subcellular location is the mitochondrion. This is an uncharacterized protein from Saccharomyces cerevisiae (strain ATCC 204508 / S288c) (Baker's yeast).